The following is a 279-amino-acid chain: Fatty acid desaturase 4-like 2, chloroplastic (279 aa).

A chloroplast-targeting transit peptide spans M1 to T30. Transmembrane regions (helical) follow at residues L68–G90, S98–A118, and V178–A198.

It belongs to the fatty acid desaturase CarF family.

The protein localises to the plastid. It is found in the chloroplast membrane. Its pathway is lipid metabolism; fatty acid metabolism. Functionally, fatty acid desaturase involved in the production of chloroplast-specific phosphatidylglycerol molecular species. Catalyzes the formation of a trans double bond introduced close to the carboxyl group of palmitic acid, which is specifically esterified to the sn-2 glyceryl carbon of phosphatidylglycerol. This chain is Fatty acid desaturase 4-like 2, chloroplastic (FAD4L2), found in Arabidopsis thaliana (Mouse-ear cress).